The primary structure comprises 132 residues: 3-aminoacrylate deaminase RutC (132 aa).

The protein belongs to the RutC family.

The enzyme catalyses (Z)-3-aminoacrylate + H2O + H(+) = 3-oxopropanoate + NH4(+). Involved in pyrimidine catabolism. Catalyzes the deamination of 3-aminoacrylate to malonic semialdehyde, a reaction that can also occur spontaneously. RutC may facilitate the reaction and modulate the metabolic fitness, rather than catalyzing essential functions. This is 3-aminoacrylate deaminase RutC from Cronobacter sakazakii (strain ATCC BAA-894) (Enterobacter sakazakii).